Here is a 183-residue protein sequence, read N- to C-terminus: Acireductone dioxygenase (183 aa).

The interval 1 to 21 (MVQAWYMDSDTTTDQREEHQL) is disordered. Residues His90, His92, Glu96, and His135 each contribute to the Fe(2+) site. Ni(2+)-binding residues include His90, His92, Glu96, and His135.

It belongs to the acireductone dioxygenase (ARD) family. Requires Fe(2+) as cofactor. Ni(2+) serves as cofactor.

The protein localises to the cytoplasm. It is found in the nucleus. It carries out the reaction 1,2-dihydroxy-5-(methylsulfanyl)pent-1-en-3-one + O2 = 4-methylsulfanyl-2-oxobutanoate + formate + 2 H(+). It catalyses the reaction 1,2-dihydroxy-5-(methylsulfanyl)pent-1-en-3-one + O2 = 3-(methylsulfanyl)propanoate + CO + formate + 2 H(+). It participates in amino-acid biosynthesis; L-methionine biosynthesis via salvage pathway; L-methionine from S-methyl-5-thio-alpha-D-ribose 1-phosphate: step 5/6. Functionally, catalyzes 2 different reactions between oxygen and the acireductone 1,2-dihydroxy-3-keto-5-methylthiopentene (DHK-MTPene) depending upon the metal bound in the active site. Fe-containing acireductone dioxygenase (Fe-ARD) produces formate and 2-keto-4-methylthiobutyrate (KMTB), the alpha-ketoacid precursor of methionine in the methionine recycle pathway. Ni-containing acireductone dioxygenase (Ni-ARD) produces methylthiopropionate, carbon monoxide and formate, and does not lie on the methionine recycle pathway. This is Acireductone dioxygenase from Ixodes scapularis (Black-legged tick).